The following is a 520-amino-acid chain: GMP synthase [glutamine-hydrolyzing] (520 aa).

Residues 12–205 (KIIVLDYGSQ…AISICGARGD (194 aa)) form the Glutamine amidotransferase type-1 domain. The active-site Nucleophile is the C89. Residues H179 and E181 contribute to the active site. Residues 206 to 395 (WSMDNFIDME…LGMPEEIVWR (190 aa)) form the GMPS ATP-PPase domain. An ATP-binding site is contributed by 233 to 239 (SGGVDSS).

As to quaternary structure, homodimer.

The enzyme catalyses XMP + L-glutamine + ATP + H2O = GMP + L-glutamate + AMP + diphosphate + 2 H(+). It participates in purine metabolism; GMP biosynthesis; GMP from XMP (L-Gln route): step 1/1. Functionally, catalyzes the synthesis of GMP from XMP. In Streptococcus pyogenes serotype M5 (strain Manfredo), this protein is GMP synthase [glutamine-hydrolyzing].